A 334-amino-acid polypeptide reads, in one-letter code: Glycerol-3-phosphate dehydrogenase [NAD(P)+] (334 aa).

Ser14, Tyr15, Arg35, and Lys109 together coordinate NADPH. The sn-glycerol 3-phosphate site is built by Lys109, Gly138, and Thr140. Ala142 is an NADPH binding site. Lys194, Asp247, Ser257, Arg258, and Asn259 together coordinate sn-glycerol 3-phosphate. Lys194 functions as the Proton acceptor in the catalytic mechanism. Residue Arg258 participates in NADPH binding. Residues Val282 and Glu284 each contribute to the NADPH site.

This sequence belongs to the NAD-dependent glycerol-3-phosphate dehydrogenase family.

The protein resides in the cytoplasm. The enzyme catalyses sn-glycerol 3-phosphate + NAD(+) = dihydroxyacetone phosphate + NADH + H(+). It catalyses the reaction sn-glycerol 3-phosphate + NADP(+) = dihydroxyacetone phosphate + NADPH + H(+). It functions in the pathway membrane lipid metabolism; glycerophospholipid metabolism. Catalyzes the reduction of the glycolytic intermediate dihydroxyacetone phosphate (DHAP) to sn-glycerol 3-phosphate (G3P), the key precursor for phospholipid synthesis. The chain is Glycerol-3-phosphate dehydrogenase [NAD(P)+] from Colwellia psychrerythraea (strain 34H / ATCC BAA-681) (Vibrio psychroerythus).